Here is a 225-residue protein sequence, read N- to C-terminus: Octanoyltransferase (225 aa).

Residues 29–210 form the BPL/LPL catalytic domain; it reads PDTDDEIWVV…RLIAHLDGAT (182 aa). Substrate contacts are provided by residues 69-76, 141-143, and 154-156; these read RGGQITYH, ALG, and GLS. Cys-172 acts as the Acyl-thioester intermediate in catalysis.

Belongs to the LipB family.

The protein localises to the cytoplasm. It carries out the reaction octanoyl-[ACP] + L-lysyl-[protein] = N(6)-octanoyl-L-lysyl-[protein] + holo-[ACP] + H(+). Its pathway is protein modification; protein lipoylation via endogenous pathway; protein N(6)-(lipoyl)lysine from octanoyl-[acyl-carrier-protein]: step 1/2. In terms of biological role, catalyzes the transfer of endogenously produced octanoic acid from octanoyl-acyl-carrier-protein onto the lipoyl domains of lipoate-dependent enzymes. Lipoyl-ACP can also act as a substrate although octanoyl-ACP is likely to be the physiological substrate. The chain is Octanoyltransferase from Burkholderia pseudomallei (strain K96243).